Reading from the N-terminus, the 226-residue chain is Peroxiredoxin-like 2C (226 aa).

This sequence belongs to the peroxiredoxin-like PRXL2 family. PRXL2C subfamily.

The sequence is that of Peroxiredoxin-like 2C (prxl2c) from Takifugu rubripes (Japanese pufferfish).